A 463-amino-acid polypeptide reads, in one-letter code: Glutamate--tRNA ligase 1 (463 aa).

The 'HIGH' region motif lies at 10 to 20 (PSPTGYLHIGG). A 'KMSKS' region motif is present at residues 238-242 (KLSKR). Lysine 241 provides a ligand contact to ATP.

It belongs to the class-I aminoacyl-tRNA synthetase family. Glutamate--tRNA ligase type 1 subfamily. As to quaternary structure, monomer.

The protein localises to the cytoplasm. The catalysed reaction is tRNA(Glu) + L-glutamate + ATP = L-glutamyl-tRNA(Glu) + AMP + diphosphate. In terms of biological role, catalyzes the attachment of glutamate to tRNA(Glu) in a two-step reaction: glutamate is first activated by ATP to form Glu-AMP and then transferred to the acceptor end of tRNA(Glu). This chain is Glutamate--tRNA ligase 1, found in Helicobacter pylori (strain ATCC 700392 / 26695) (Campylobacter pylori).